A 280-amino-acid polypeptide reads, in one-letter code: MNRFPTERPADFVDDLKVPAAPDALFFIVREGKLLLSDAGELPSGHSLAGQAVIALGRLGERPVFALPLTGEAPAGAQLVGLRQCFGVLPDGLFGLAGLAVQLVDFQRSHQFCGACGTPMRPGEGDRARRCPSCGLRVYPRVAPAIIVLISRGTGPDTEFLLLRGPRQAPDVFTTLAGFVEPSETLEAAVHREVGEEVGVKVRQVQYRFSQPWPFPHSLMLAFTAEYAGGDIVPQPGEVEEAQWFTVSDLPQLPPTFTASRRLLDDALATLRLSGDFATT.

A substrate-binding site is contributed by Arg-83. Cys-113, Cys-116, Cys-131, and Cys-134 together coordinate Zn(2+). Tyr-139 is a binding site for substrate. One can recognise a Nudix hydrolase domain in the interval 140–268 (PRVAPAIIVL…ASRRLLDDAL (129 aa)). The a divalent metal cation site is built by Ala-177, Glu-193, and Glu-197. A Nudix box motif is present at residues 178–199 (GFVEPSETLEAAVHREVGEEVG). Substrate is bound at residue 211–218 (QPWPFPHS). Glu-238 lines the a divalent metal cation pocket.

It belongs to the Nudix hydrolase family. NudC subfamily. In terms of assembly, homodimer. Mg(2+) is required as a cofactor. Mn(2+) serves as cofactor. The cofactor is Zn(2+).

The enzyme catalyses a 5'-end NAD(+)-phospho-ribonucleoside in mRNA + H2O = a 5'-end phospho-adenosine-phospho-ribonucleoside in mRNA + beta-nicotinamide D-ribonucleotide + 2 H(+). The catalysed reaction is NAD(+) + H2O = beta-nicotinamide D-ribonucleotide + AMP + 2 H(+). It catalyses the reaction NADH + H2O = reduced beta-nicotinamide D-ribonucleotide + AMP + 2 H(+). In terms of biological role, mRNA decapping enzyme that specifically removes the nicotinamide adenine dinucleotide (NAD) cap from a subset of mRNAs by hydrolyzing the diphosphate linkage to produce nicotinamide mononucleotide (NMN) and 5' monophosphate mRNA. The NAD-cap is present at the 5'-end of some mRNAs and stabilizes RNA against 5'-processing. Has preference for mRNAs with a 5'-end purine. Catalyzes the hydrolysis of a broad range of dinucleotide pyrophosphates. This is NAD-capped RNA hydrolase NudC from Deinococcus radiodurans (strain ATCC 13939 / DSM 20539 / JCM 16871 / CCUG 27074 / LMG 4051 / NBRC 15346 / NCIMB 9279 / VKM B-1422 / R1).